We begin with the raw amino-acid sequence, 580 residues long: Xylulose kinase (580 aa).

Substrate is bound by residues histidine 99, arginine 170, aspartate 280, and asparagine 281. ATP contacts are provided by residues tryptophan 355, 441 to 442, and asparagine 445; that span reads GA.

It belongs to the FGGY kinase family. In terms of assembly, monomer.

It catalyses the reaction D-xylulose + ATP = D-xylulose 5-phosphate + ADP + H(+). Phosphorylates D-xylulose to produce D-xylulose 5-phosphate, a molecule that may play an important role in the regulation of glucose metabolism and lipogenesis. This chain is Xylulose kinase (XYLB), found in Pongo abelii (Sumatran orangutan).